We begin with the raw amino-acid sequence, 236 residues long: Orotidine 5'-phosphate decarboxylase (236 aa).

Residues Asp-13, Lys-35, Asp-62–Thr-71, Thr-123, Arg-184, Gln-193, Gly-213, and Arg-214 each bind substrate. Residue Lys-64 is the Proton donor of the active site.

Belongs to the OMP decarboxylase family. Type 1 subfamily. As to quaternary structure, homodimer.

It carries out the reaction orotidine 5'-phosphate + H(+) = UMP + CO2. It participates in pyrimidine metabolism; UMP biosynthesis via de novo pathway; UMP from orotate: step 2/2. Functionally, catalyzes the decarboxylation of orotidine 5'-monophosphate (OMP) to uridine 5'-monophosphate (UMP). The sequence is that of Orotidine 5'-phosphate decarboxylase from Coxiella burnetii (strain CbuK_Q154) (Coxiella burnetii (strain Q154)).